We begin with the raw amino-acid sequence, 410 residues long: Chitin deacetylase 3 (410 aa).

Residues 1–18 (MYGHLSLSTLSLLAVVAA) form the signal peptide. The propeptide occupies 19–39 (APFPESWLQPRDSDVSQLFRR). N-linked (GlcNAc...) asparagine glycosylation is found at Asn-61 and Asn-80. Residues 124 to 314 (KVWALSFDDG…KAVANGWSVK (191 aa)) enclose the NodB homology domain. Asp-131 functions as the Proton acceptor in the catalytic mechanism. Asp-131 is an acetate binding site. Asp-132 contributes to the Co(2+) binding site. Asn-149 carries an N-linked (GlcNAc...) asparagine glycan. Positions 183 and 187 each coordinate Co(2+). Residue Tyr-225 coordinates acetate. N-linked (GlcNAc...) asparagine glycosylation occurs at Asn-279. The active-site Proton donor is the His-289. N-linked (GlcNAc...) asparagine glycosylation occurs at Asn-293. Ser-385 is lipidated: GPI-anchor amidated serine. A propeptide spans 386-410 (SSWPIANRPSLFVIACGLALAAIMV) (removed in mature form).

It belongs to the polysaccharide deacetylase family. It depends on Co(2+) as a cofactor.

The protein localises to the cell membrane. The catalysed reaction is [(1-&gt;4)-N-acetyl-beta-D-glucosaminyl](n) + n H2O = chitosan + n acetate. Functionally, hydrolyzes the N-acetamido groups of N-acetyl-D-glucosamine residues in chitin to form chitosan and acetate. Chitosan is required to anchor melanin to the cell wall, for maintenance of cell wall integrity, and for proper cytokinesis. Chitosan offers an advantage during infection as it is less readily detected than chitin by host immunosurveillance mechanisms. The protein is Chitin deacetylase 3 of Cryptococcus neoformans var. neoformans serotype D (strain JEC21 / ATCC MYA-565) (Filobasidiella neoformans).